Reading from the N-terminus, the 101-residue chain is Small ribosomal subunit protein uS14 (101 aa).

The protein belongs to the universal ribosomal protein uS14 family. Part of the 30S ribosomal subunit. Contacts proteins S3 and S10.

Binds 16S rRNA, required for the assembly of 30S particles and may also be responsible for determining the conformation of the 16S rRNA at the A site. This Chlamydia muridarum (strain MoPn / Nigg) protein is Small ribosomal subunit protein uS14.